The following is a 199-amino-acid chain: N-(5'-phosphoribosyl)anthranilate isomerase (199 aa).

Belongs to the TrpF family.

It catalyses the reaction N-(5-phospho-beta-D-ribosyl)anthranilate = 1-(2-carboxyphenylamino)-1-deoxy-D-ribulose 5-phosphate. The protein operates within amino-acid biosynthesis; L-tryptophan biosynthesis; L-tryptophan from chorismate: step 3/5. The protein is N-(5'-phosphoribosyl)anthranilate isomerase of Streptococcus pneumoniae (strain Taiwan19F-14).